The following is a 245-amino-acid chain: Probable phosphatase YcdX (245 aa).

The Zn(2+) site is built by H7, H9, H15, H40, E73, H101, H131, D192, and H194.

The protein belongs to the PHP family. Homotrimer. Zn(2+) serves as cofactor.

The protein is Probable phosphatase YcdX of Salmonella agona (strain SL483).